Reading from the N-terminus, the 88-residue chain is EKC/KEOPS complex subunit SPAC4H3.13 (88 aa).

Belongs to the CTAG/PCC1 family. Component of the EKC/KEOPS complex composed of at least of SPAP27G11.07c/BUD32, cgi121, gon7, pgp2 and SPAC4H3.13/PCC1; the whole complex dimerizes.

The protein resides in the cytoplasm. It localises to the nucleus. Its subcellular location is the chromosome. It is found in the telomere. In terms of biological role, component of the EKC/KEOPS complex that is required for the formation of a threonylcarbamoyl group on adenosine at position 37 (t(6)A37) in tRNAs that read codons beginning with adenine. The complex is probably involved in the transfer of the threonylcarbamoyl moiety of threonylcarbamoyl-AMP (TC-AMP) to the N6 group of A37. SPAC4H3.13/PCC1 functions as a dimerization module for the complex. The EKC/KEOPS complex also promotes both telomere uncapping and telomere elongation. The complex is required for efficient recruitment of transcriptional coactivators. This chain is EKC/KEOPS complex subunit SPAC4H3.13, found in Schizosaccharomyces pombe (strain 972 / ATCC 24843) (Fission yeast).